A 90-amino-acid chain; its full sequence is MSSGGLLLLLGLLTLWAELTPVSGKNRPEFCNLPADTGPCKAYEPRFYYDSVSKECQKFTYGGCKGNSNNFESMDECRKTCVASATRRPT.

The signal sequence occupies residues 1–24 (MSSGGLLLLLGLLTLWAELTPVSG). Residues 31–81 (CNLPADTGPCKAYEPRFYYDSVSKECQKFTYGGCKGNSNNFESMDECRKTC) form the BPTI/Kunitz inhibitor domain. Disulfide bonds link Cys31-Cys81, Cys40-Cys64, and Cys56-Cys77.

It belongs to the venom Kunitz-type family. As to expression, expressed by the venom gland.

The protein localises to the secreted. Functionally, serine protease inhibitor. The chain is Kunitz-type serine protease inhibitor bitisilin-1 from Bitis gabonica (Gaboon adder).